The primary structure comprises 370 residues: Leucine-rich repeat-containing protein 19 (370 aa).

Positions 1–24 (MKVTGITILFWPLSMILLSDKIQS) are cleaved as a signal peptide. Topologically, residues 25–270 (SKREVQCNFT…SEHEPLGKSW (246 aa)) are extracellular. 4 N-linked (GlcNAc...) asparagine glycosylation sites follow: N32, N37, N62, and N95. 5 LRR repeats span residues 46–71 (KKDVTILDLSYNQITLNGTDTRVLQT), 72–95 (YFLLTELYLIENKVTILHNNGFGN), 96–119 (LSSLEILNICRNSIYVIQQGAFLG), 120–143 (LNKLKQLYLCQNKIEQLNADVFVP), and 145–168 (RSLKLLNLQGNLISYLDVPPLFHL). The 52-residue stretch at 176-227 (NLWNCSCSLFNLQNWLNTSNVTLENENITMCSYPNSLQSYNIKTVPHKAECH) folds into the LRRCT domain. Residues N179, N192, N195, N202, N251, and N256 are each glycosylated (N-linked (GlcNAc...) asparagine). Residues 271-291 (AFLVGVVVTVLTTSLLIFIAI) traverse the membrane as a helical segment. Over 292-370 (KCPIWYNILL…IDIHELCEEN (79 aa)) the chain is Cytoplasmic.

As to quaternary structure, interacts with TRAF2 and TRAF6. As to expression, expressed in renal collecting duct epithelial cells.

It localises to the membrane. With respect to regulation, activated by TLR ligands such as LPS, bacterial DNA and peptidoglycan. Pathogen-recognition receptor which mediates the activation of TRAF2- and TRAF6 NF-kappa-B signaling pathways and induces the expression of pro-inflammatory cytokines. In kidney, prevents infection by uropathogenic bacteria by inducing the production of cytokines, chemokines and antimicrobial substances. In gut, involved in host-microbiota interactions, plays a critical role in promoting the recruitment of immune cells and intestinal inflammation. The polypeptide is Leucine-rich repeat-containing protein 19 (Homo sapiens (Human)).